Reading from the N-terminus, the 901-residue chain is Protein translocase subunit SecA (901 aa).

ATP is bound by residues Q89, G107–T111, and D502. A disordered region spans residues Y838–D883. Zn(2+)-binding residues include C885, C887, C896, and H897.

The protein belongs to the SecA family. In terms of assembly, monomer and homodimer. Part of the essential Sec protein translocation apparatus which comprises SecA, SecYEG and auxiliary proteins SecDF-YajC and YidC. It depends on Zn(2+) as a cofactor.

It is found in the cell inner membrane. The protein resides in the cytoplasm. The catalysed reaction is ATP + H2O + cellular proteinSide 1 = ADP + phosphate + cellular proteinSide 2.. Functionally, part of the Sec protein translocase complex. Interacts with the SecYEG preprotein conducting channel. Has a central role in coupling the hydrolysis of ATP to the transfer of proteins into and across the cell membrane, serving both as a receptor for the preprotein-SecB complex and as an ATP-driven molecular motor driving the stepwise translocation of polypeptide chains across the membrane. The sequence is that of Protein translocase subunit SecA from Paracoccus denitrificans (strain Pd 1222).